A 128-amino-acid chain; its full sequence is Protein SOB FIVE-LIKE 3 (128 aa).

Disordered regions lie at residues 1-26 and 54-128; these read MEREECSSSESGWTTYISSRMEEEEE and KDSD…HKKK. A compositionally biased stretch (polar residues) spans 8–18; the sequence is SSESGWTTYIS. Residues 11–16 carry the SOFL-A motif; sequence SGWTTY. An SOFL-B motif is present at residues 59–68; sequence SMASDASSGP. Over residues 80–104 the composition is skewed to basic and acidic residues; it reads REGLALRNGKGESNDVYSHRIDDKN. A Nuclear localization signal motif is present at residues 111-118; that stretch reads RKKEKKKS.

This sequence belongs to the SOFL plant protein family. As to expression, expressed in seedlings, roots, flowers and siliques.

It localises to the cytoplasm. Its subcellular location is the nucleus. In terms of biological role, involved in cytokinin-mediated development. This Arabidopsis thaliana (Mouse-ear cress) protein is Protein SOB FIVE-LIKE 3.